The chain runs to 365 residues: Probable dual-specificity RNA methyltransferase RlmN (365 aa).

Glu-108 functions as the Proton acceptor in the catalytic mechanism. Residues 114–352 (YPDRNTVCIS…SCTVRDTRGR (239 aa)) enclose the Radical SAM core domain. Cys-121 and Cys-358 form a disulfide bridge. [4Fe-4S] cluster contacts are provided by Cys-128, Cys-132, and Cys-135. S-adenosyl-L-methionine contacts are provided by residues 179-180 (GE), Ser-213, 236-238 (SLH), and Asn-315. Cys-358 acts as the S-methylcysteine intermediate in catalysis.

It belongs to the radical SAM superfamily. RlmN family. The cofactor is [4Fe-4S] cluster.

It is found in the cytoplasm. It carries out the reaction adenosine(2503) in 23S rRNA + 2 reduced [2Fe-2S]-[ferredoxin] + 2 S-adenosyl-L-methionine = 2-methyladenosine(2503) in 23S rRNA + 5'-deoxyadenosine + L-methionine + 2 oxidized [2Fe-2S]-[ferredoxin] + S-adenosyl-L-homocysteine. The catalysed reaction is adenosine(37) in tRNA + 2 reduced [2Fe-2S]-[ferredoxin] + 2 S-adenosyl-L-methionine = 2-methyladenosine(37) in tRNA + 5'-deoxyadenosine + L-methionine + 2 oxidized [2Fe-2S]-[ferredoxin] + S-adenosyl-L-homocysteine. Specifically methylates position 2 of adenine 2503 in 23S rRNA and position 2 of adenine 37 in tRNAs. The chain is Probable dual-specificity RNA methyltransferase RlmN from Mycolicibacterium vanbaalenii (strain DSM 7251 / JCM 13017 / BCRC 16820 / KCTC 9966 / NRRL B-24157 / PYR-1) (Mycobacterium vanbaalenii).